The sequence spans 805 residues: Transforming acidic coiled-coil-containing protein 1 (805 aa).

Position 2 is an N-acetylalanine (Ala-2). Residue Ala-2 is the site of N-myristoyl glycine attachment. The segment at 2-55 (AFSPWQILSPVQWAKWTWSAVRGGAAGEDEAGGPEGDPEEEDSQAETKSLSFSS) is interaction with LSM7 and SNRPG. Residues Ser-4, Ser-10, and Ser-44 each carry the phosphoserine modification. Residues 23–140 (RGGAAGEDEA…SVKNFREEPE (118 aa)) form a disordered region. The span at 28 to 45 (GEDEAGGPEGDPEEEDSQ) shows a compositional bias: acidic residues. Polar residues-rich tracts occupy residues 47–60 (ETKSLSFSSDSEGN) and 111–128 (SKTCSKPSENEVPQQAID). Basic and acidic residues predominate over residues 130–140 (HSVKNFREEPE). 2 positions are modified to phosphoserine: Ser-147 and Ser-153. The segment at 152–259 (FSIETKDSTD…TNAAVEGTPL (108 aa)) is interaction with TDRD7. The segment at 206 to 427 (EASAEADLKA…DPDNFDESMD (222 aa)) is interaction with YEATS4. SPAZ domains are found at residues 215–297 (AGNS…TPGT) and 359–507 (SKSA…TDEE). Positions 215–457 (AGNSCPELVP…VNEILESPKK (243 aa)) are disordered. A Bipartite nuclear localization signal 1 motif is present at residues 226–241 (RRSKLRKPKPVPLRKK). Residues 226-242 (RRSKLRKPKPVPLRKKA) show a composition bias toward basic residues. Ser-228 carries the post-translational modification Phosphoserine; by AURKC. Ser-248 and Ser-276 each carry phosphoserine. 3 stretches are compositionally biased toward polar residues: residues 296 to 305 (GTLSSDTNDS), 377 to 413 (LSQTSSKPDPSQWESPSFNPFGSHSVLQNSPPLSSEG), and 431 to 447 (PTTTLTSSDFCSPTGNH). A phosphoserine mark is found at Ser-381 and Ser-406. The Bipartite nuclear localization signal 2 motif lies at 455–471 (PKKAKSRLITSGCKVKK). Ser-483 is modified (phosphoserine). The disordered stretch occupies residues 493 to 526 (ISDISNRDGHATDEEKLASTSCGQKSAGAEVKGE). Residues 497–509 (SNRDGHATDEEKL) are compositionally biased toward basic and acidic residues. Position 533 is a phosphotyrosine (Tyr-533). A Phosphoserine modification is found at Ser-591. Positions 610–805 (IREEIITKEI…ELIAKLGKTD (196 aa)) form a coiled coil. Residues 701-805 (VLEGFKKNEE…ELIAKLGKTD (105 aa)) are interaction with CH-TOG.

Belongs to the TACC family. Interacts with KIAA0097/CH-TOG and with the oncogenic transcription factor YEATS4. Interacts with AURKA, AURKB and AURKC. Interacts with LSM7, TDRD7 and SNRPG. Interacts with GCN5L2 and PCAF. Interacts with the thyroid hormone receptors THRB and THRA, predominantly with isoform alpha-2. The interaction with THRA isoform alpha-1 and THRB is decreased in the presence of thyroid hormone T3. Also interacts with other nuclear receptors, including ESR1, NR3C1, PPARG, RARA and RXRA, preferentially in the absence of their hormonal ligands. In terms of processing, isoform 1 is heavily phosphorylated; isoform 6 is not. As to expression, isoform 1, isoform 3 and isoform 5 are ubiquitous. Isoform 2 is strongly expressed in the brain, weakly detectable in lung and colon, and overexpressed in gastric cancer. Isoform 4 is not detected in normal tissues, but strong expression was found in gastric cancer tissues. Down-regulated in a subset of cases of breast cancer.

It is found in the cytoplasm. Its subcellular location is the nucleus. It localises to the cytoskeleton. The protein resides in the microtubule organizing center. The protein localises to the centrosome. It is found in the midbody. Its subcellular location is the membrane. In terms of biological role, involved in transcription regulation induced by nuclear receptors, including in T3 thyroid hormone and all-trans retinoic acid pathways. Might promote the nuclear localization of the receptors. Likely involved in the processes that promote cell division prior to the formation of differentiated tissues. The polypeptide is Transforming acidic coiled-coil-containing protein 1 (TACC1) (Homo sapiens (Human)).